We begin with the raw amino-acid sequence, 111 residues long: Cell division topological specificity factor (111 aa).

Belongs to the MinE family.

Its function is as follows. Prevents the cell division inhibition by proteins MinC and MinD at internal division sites while permitting inhibition at polar sites. This ensures cell division at the proper site by restricting the formation of a division septum at the midpoint of the long axis of the cell. This is Cell division topological specificity factor from Prochlorococcus marinus (strain MIT 9312).